The following is a 202-amino-acid chain: Small heat shock protein hspG5 (202 aa).

The 172-residue stretch at 31–202 (KTIIDIIPPM…YSNTIKININ (172 aa)) folds into the sHSP domain. The disordered stretch occupies residues 96-138 (TSSTTLDSKEDEASIEEFEDDIKPKSKSTVTTTATKENKEDEN).

This sequence belongs to the small heat shock protein (HSP20) family.

The protein is Small heat shock protein hspG5 (hspG5) of Dictyostelium discoideum (Social amoeba).